We begin with the raw amino-acid sequence, 616 residues long: Angiotensin-converting enzyme (616 aa).

An N-terminal signal peptide occupies residues 1–23; that stretch reads MNLINFSYLNLLFGAGLFSVLES. The Peptidase M2 domain maps to 27 to 610; it reads LNTESDAKKW…PRAENWMGGK (584 aa). N61 and N96 each carry an N-linked (GlcNAc...) asparagine glycan. Residues C142 and C152 are joined by a disulfide bond. Residues R180 and Y218 each contribute to the chloride site. N303 carries an N-linked (GlcNAc...) asparagine glycan. C345 and C363 are joined by a disulfide. Zn(2+) is bound at residue H376. The Proton acceptor role is filled by E377. H380 and E404 together coordinate Zn(2+). N-linked (GlcNAc...) asparagine glycosylation occurs at N428. Residues W478 and R482 each coordinate chloride. Catalysis depends on H506, which acts as the Proton donor. R515 contacts chloride. A disulfide bridge links C531 with C543. 2 N-linked (GlcNAc...) asparagine glycosylation sites follow: N535 and N573.

It belongs to the peptidase M2 family. Zn(2+) serves as cofactor. Requires chloride as cofactor. Epithelial cells of the midgut.

The protein resides in the secreted. Its subcellular location is the extracellular space. It catalyses the reaction Release of a C-terminal dipeptide, oligopeptide-|-Xaa-Yaa, when Xaa is not Pro, and Yaa is neither Asp nor Glu. Thus, conversion of angiotensin I to angiotensin II, with increase in vasoconstrictor activity, but no action on angiotensin II.. Its activity is regulated as follows. Activated by chloride. Inhibited by captopril and lisinopril, and to a lesser extent by delaprilat. The chain is Angiotensin-converting enzyme (ACE) from Theromyzon tessulatum (Duck leech).